The chain runs to 79 residues: ATP synthase subunit beta (79 aa).

The protein belongs to the ATPase alpha/beta chains family. F-type ATPases have 2 components, CF(1) - the catalytic core - and CF(0) - the membrane proton channel. CF(1) has five subunits: alpha(3), beta(3), gamma(1), delta(1), epsilon(1). CF(0) has three main subunits: a(1), b(2) and c(9-12). The alpha and beta chains form an alternating ring which encloses part of the gamma chain. CF(1) is attached to CF(0) by a central stalk formed by the gamma and epsilon chains, while a peripheral stalk is formed by the delta and b chains.

It localises to the cell membrane. The enzyme catalyses ATP + H2O + 4 H(+)(in) = ADP + phosphate + 5 H(+)(out). Its function is as follows. Produces ATP from ADP in the presence of a proton gradient across the membrane. The catalytic sites are hosted primarily by the beta subunits. The polypeptide is ATP synthase subunit beta (atpD) (Streptococcus downei (Streptococcus sobrinus)).